The primary structure comprises 402 residues: CinA-like protein (402 aa).

This sequence belongs to the CinA family.

The polypeptide is CinA-like protein (Escherichia coli O17:K52:H18 (strain UMN026 / ExPEC)).